The following is a 256-amino-acid chain: MGNNCYNVVVIVLLLVGCEKVGAVQNSCDNCQPGTFCRKYNPVCKSCPPSTFSSIGGQPNCNICRVCAGYFRFKKFCSSTHNAECECIEGFHCLGPQCTRCEKDCRPGQELTKQGCKTCSLGTFNDQNGTGVCRPWTNCSLDGRSVLKTGTTEKDVVCGPPVVSFSPSTTISVTPEGGPGGHSLQVLTLFLALTSALLLALIFITLLFSVLKWIRKKFPHIFKQPFKKTTGAAQEEDACSCRCPQEEEGGGGGYEL.

A signal peptide spans 1–23 (MGNNCYNVVVIVLLLVGCEKVGA). TNFR-Cys repeat units follow at residues 24–45 (VQNS…PVCK), 46–85 (SCPP…NAEC), 86–117 (ECIE…QGCK), and 118–159 (TCSL…VVCG). Residues 24 to 187 (VQNSCDNCQP…GPGGHSLQVL (164 aa)) lie on the Extracellular side of the membrane. Cystine bridges form between cysteine 28/cysteine 37, cysteine 31/cysteine 44, cysteine 47/cysteine 61, cysteine 64/cysteine 77, cysteine 67/cysteine 85, cysteine 87/cysteine 93, cysteine 98/cysteine 105, cysteine 101/cysteine 116, and cysteine 119/cysteine 133. N-linked (GlcNAc...) asparagine glycans are attached at residues asparagine 128 and asparagine 138. Residues cysteine 139 and cysteine 158 are joined by a disulfide bond. Residues 188–208 (TLFLALTSALLLALIFITLLF) traverse the membrane as a helical segment. At 209–256 (SVLKWIRKKFPHIFKQPFKKTTGAAQEEDACSCRCPQEEEGGGGGYEL) the chain is on the cytoplasmic side.

As to quaternary structure, predominantly homodimeric, but may also exist as a monomer. Associates with p56-LCK. Interacts with TRAF1, TRAF2 and TRAF3. As to expression, expressed in activated thymocytes, splenic T cells, CD4(+), and CD8(+) T-cells.

It localises to the cell membrane. Functionally, receptor for TNFSF9/4-1BBL. Conveys a signal that enhances CD8(+) T-cell survival, cytotoxicity, and mitochondrial activity, thereby promoting immunity against viruses and tumors. The protein is Tumor necrosis factor receptor superfamily member 9 (Tnfrsf9) of Mus musculus (Mouse).